Here is a 282-residue protein sequence, read N- to C-terminus: Flagellin (282 aa).

Belongs to the bacterial flagellin family.

The protein resides in the secreted. Its subcellular location is the bacterial flagellum. Its function is as follows. Flagellin is the subunit protein which polymerizes to form the filaments of bacterial flagella. The flagellum is required to cause a persistent disease in a murine model of infection. This Brucella melitensis biotype 1 (strain ATCC 23456 / CCUG 17765 / NCTC 10094 / 16M) protein is Flagellin (fliC).